The sequence spans 367 residues: MLYHLIRPLLFRLDAERAHDVVTAMFRATSRMPLLPRLISALYAWDDPALMVEWAGLRFASPLGVAAGFDKRADLVDALALLGFSHVEVGTVTPRPQPGNPGPRLFRLPEDMALINRLGFNSHGMVAVAKALRARRSRRVIVGVNIGKNRDTPLERAVEDYAATFVALAPLADYVAVNISSPNTPGLRRLHERAALEELLRELMRLNHGLLYPRPIALKISPDETLDQIEEVVRAGCEAGVAAFIATNTTLAREGLRSRLANETGGLSGRPLAPRARQVIRAIYRLTRGTPPVIGVGGVLTADDAYAHIRAGARLVQLYTGMVYAGPAIAREIKRGLAQLLRRDGFVSVTQATGVDAEWEGAIRQRG.

FMN-binding positions include 67 to 71 and Thr-91; that span reads AGFDK. Residue Lys-71 participates in substrate binding. A substrate-binding site is contributed by 116–120; that stretch reads NRLGF. Asn-145 and Asn-178 together coordinate FMN. Asn-178 is a substrate binding site. The active-site Nucleophile is Ser-181. Asn-183 serves as a coordination point for substrate. FMN contacts are provided by Lys-219 and Thr-247. 248 to 249 serves as a coordination point for substrate; the sequence is NT. Residues Gly-269, Gly-298, and 319 to 320 contribute to the FMN site; that span reads YT.

This sequence belongs to the dihydroorotate dehydrogenase family. Type 2 subfamily. In terms of assembly, monomer. Requires FMN as cofactor.

The protein localises to the cell membrane. It catalyses the reaction (S)-dihydroorotate + a quinone = orotate + a quinol. The protein operates within pyrimidine metabolism; UMP biosynthesis via de novo pathway; orotate from (S)-dihydroorotate (quinone route): step 1/1. Catalyzes the conversion of dihydroorotate to orotate with quinone as electron acceptor. This Roseiflexus castenholzii (strain DSM 13941 / HLO8) protein is Dihydroorotate dehydrogenase (quinone).